Reading from the N-terminus, the 376-residue chain is Probable plastid-lipid-associated protein 3, chloroplastic (376 aa).

A chloroplast-targeting transit peptide spans 1–53 (MATLFTVARPSSLLYVSSINPSKTFSPSISLKLNSLSFSFGYRPKPLRFSKIR). A disordered region spans residues 54-146 (SSLPSESESE…EADAGNGSAV (93 aa)). Residues 85-96 (PDSQPDNVTVNV) are compositionally biased toward polar residues. The segment covering 117–126 (MESDPPRNED) has biased composition (basic and acidic residues).

The protein belongs to the PAP/fibrillin family.

Its subcellular location is the plastid. The protein localises to the chloroplast. The protein resides in the plastoglobule. Its function is as follows. Probably involved in light/cold stress-related jasmonate (JA) biosynthesis. The sequence is that of Probable plastid-lipid-associated protein 3, chloroplastic (PAP3) from Arabidopsis thaliana (Mouse-ear cress).